The chain runs to 211 residues: Interleukin-6 (211 aa).

A signal peptide spans 1–24 (MKFLSARDFQPVAFLGLMLLTATA). C70 and C76 are joined by a disulfide. S79 carries the post-translational modification Phosphoserine. Cysteines 99 and 109 form a disulfide.

The protein belongs to the IL-6 superfamily. In terms of assembly, component of a hexamer of two molecules each of IL6, IL6R and IL6ST; first binds to IL6R to associate with the signaling subunit IL6ST. Interacts with IL6R (via the N-terminal ectodomain); this interaction may be affected by IL6R-binding with SORL1, hence decreasing IL6 cis signaling. Interacts with SORL1 (via the N-terminal ectodomain); this interaction leads to IL6 internalization and lysosomal degradation. May form a trimeric complex with the soluble SORL1 ectodomain and soluble IL6R receptor; this interaction might stabilize circulating IL6, hence promoting IL6 trans signaling.

It localises to the secreted. Its function is as follows. Cytokine with a wide variety of biological functions in immunity, tissue regeneration, and metabolism. Binds to IL6R, then the complex associates to the signaling subunit IL6ST/gp130 to trigger the intracellular IL6-signaling pathway. The interaction with the membrane-bound IL6R and IL6ST stimulates 'classic signaling', whereas the binding of IL6 and soluble IL6R to IL6ST stimulates 'trans-signaling'. Alternatively, 'cluster signaling' occurs when membrane-bound IL6:IL6R complexes on transmitter cells activate IL6ST receptors on neighboring receiver cells. In terms of biological role, IL6 is a potent inducer of the acute phase response. Rapid production of IL6 contributes to host defense during infection and tissue injury, but excessive IL6 synthesis is involved in disease pathology. In the innate immune response, is synthesized by myeloid cells, such as macrophages and dendritic cells, upon recognition of pathogens through toll-like receptors (TLRs) at the site of infection or tissue injury. In the adaptive immune response, is required for the differentiation of B-cells into immunoglolin-secreting cells. Plays a major role in the differentiation of CD4(+) T cell subsets. Essential factor for the development of T follicular helper (Tfh) cells that are required for the induction of germinal-center formation. Together with IL21, controls the early generation of Tfh cells and are critical for an effective antibody response to acute viral infection. Required to drive naive CD4(+) T cells to the Th17 lineage, through 'cluster signaling' by dendritic cells. Also required for proliferation of myeloma cells and the survival of plasmablast cells. Acts as an essential factor in bone homeostasis and on vessels directly or indirectly by induction of VEGF, resulting in increased angiogenesis activity and vascular permeability. Induces, through 'trans-signaling' and synergistically with IL1B and TNF, the production of VEGF. Involved in metabolic controls, is discharged into the bloodstream after muscle contraction increasing lipolysis and improving insulin resistance. 'Trans-signaling' in central nervous system regulates energy and glucose homeostasis. Mediates, through GLP-1, crosstalk between insulin-sensitive tissues, intestinal L cells and pancreatic islets to adapt to changes in insulin demand. Also acts as a myokine. Plays a protective role during liver injury, being required for maintenance of tissue regeneration. Also has a pivotal role in iron metabolism by regulating HAMP/hepcidin expression upon inflammation or bacterial infection. Through activation of IL6ST-YAP-NOTCH pathway, induces inflammation-induced epithelial regeneration. The protein is Interleukin-6 of Rattus norvegicus (Rat).